A 234-amino-acid polypeptide reads, in one-letter code: Matrix protein 1 (234 aa).

Positions 1–103 (MHERSKPKTT…QELAEGGIRM (103 aa)) are disordered. The segment covering 76–96 (CDERSTIGRHGNADERPHQEL) has biased composition (basic and acidic residues). The stretch at 183 to 234 (PEVSFKERMEAEKKKLKELDDKIYKLRRRLRKMEYKKMGINREIDKLEDSVQ) forms a coiled coil.

In terms of assembly, interacts with host HSC70.

The protein localises to the virion. Its subcellular location is the host cytoplasm. It localises to the host nucleus. Functionally, may play a role in virus replication, from virus entry and uncoating to assembly and budding of the virus particle. Interaction of viral NEP with M1-Hsc70 is thought to promote nuclear export of the viral encapsidated genomes. This is Matrix protein 1 from Infectious salmon anemia virus (isolate Atlantic salmon/Norway/810/9/99) (ISAV).